A 336-amino-acid chain; its full sequence is Anthranilate phosphoribosyltransferase (336 aa).

Residues glycine 79, 82–83 (GD), threonine 87, 89–92 (NISS), 107–115 (KHGNRSVSS), and serine 119 contribute to the 5-phospho-alpha-D-ribose 1-diphosphate site. Glycine 79 contacts anthranilate. Serine 91 contributes to the Mg(2+) binding site. Asparagine 110 is an anthranilate binding site. Arginine 165 lines the anthranilate pocket. Residues aspartate 223 and glutamate 224 each contribute to the Mg(2+) site.

The protein belongs to the anthranilate phosphoribosyltransferase family. In terms of assembly, homodimer. The cofactor is Mg(2+).

The catalysed reaction is N-(5-phospho-beta-D-ribosyl)anthranilate + diphosphate = 5-phospho-alpha-D-ribose 1-diphosphate + anthranilate. It functions in the pathway amino-acid biosynthesis; L-tryptophan biosynthesis; L-tryptophan from chorismate: step 2/5. Catalyzes the transfer of the phosphoribosyl group of 5-phosphorylribose-1-pyrophosphate (PRPP) to anthranilate to yield N-(5'-phosphoribosyl)-anthranilate (PRA). This is Anthranilate phosphoribosyltransferase from Tolumonas auensis (strain DSM 9187 / NBRC 110442 / TA 4).